Reading from the N-terminus, the 146-residue chain is Putative actin-depolymerizing factor 8 (146 aa).

The ADF-H domain maps to 14–144 (PAWIEVPEKS…DLEVLRGRAN (131 aa)).

It belongs to the actin-binding proteins ADF family.

Functionally, actin-depolymerizing protein. Severs actin filaments (F-actin) and binds to actin monomers. In Oryza sativa subsp. japonica (Rice), this protein is Putative actin-depolymerizing factor 8 (ADF8).